The primary structure comprises 334 residues: Putative carboxypeptidase VC_A0337 (334 aa).

The active-site Nucleophile is Ser-112. Residues Glu-234 and His-302 each act as charge relay system in the active site.

This sequence belongs to the peptidase S66 family.

This chain is Putative carboxypeptidase VC_A0337, found in Vibrio cholerae serotype O1 (strain ATCC 39315 / El Tor Inaba N16961).